The primary structure comprises 451 residues: Ribonuclease J (451 aa).

Zn(2+) contacts are provided by His84, His86, Asp88, His89, His155, and Asp177. 384–388 (HVSGH) is a binding site for substrate. Residue His410 coordinates Zn(2+).

It belongs to the metallo-beta-lactamase superfamily. RNA-metabolizing metallo-beta-lactamase-like family. Archaeal RNase J subfamily. In terms of assembly, homodimer. The cofactor is Zn(2+).

It is found in the cytoplasm. Its activity is regulated as follows. Inhibited by 1,10-phenanthroline. Functionally, a highly processive 5'-3' exoribonuclease; no evidence has been seen for endonuclease activity. Prefers 5'-phosphate or 5'-hydroxyl ends; 5'-triphosphate substrates are very poorly degraded, does not degrade circular RNA. Does not degrade pre-tRNA(Trp) suggesting it is inhibited by strong secondary structures. Also degrades ssNDA but not dsDNA. The sequence is that of Ribonuclease J from Pyrococcus abyssi (strain GE5 / Orsay).